Consider the following 209-residue polypeptide: Large ribosomal subunit protein uL4 (209 aa).

This sequence belongs to the universal ribosomal protein uL4 family. Part of the 50S ribosomal subunit.

One of the primary rRNA binding proteins, this protein initially binds near the 5'-end of the 23S rRNA. It is important during the early stages of 50S assembly. It makes multiple contacts with different domains of the 23S rRNA in the assembled 50S subunit and ribosome. Functionally, forms part of the polypeptide exit tunnel. The protein is Large ribosomal subunit protein uL4 of Borrelia duttonii (strain Ly).